Consider the following 303-residue polypeptide: tRNA dimethylallyltransferase 1 (303 aa).

9–16 (GPTASGKT) lines the ATP pocket. Position 11–16 (11–16 (TASGKT)) interacts with substrate. 3 interaction with substrate tRNA regions span residues 34-37 (DSAL), 158-162 (QRLIR), and 239-244 (RCVGYR).

It belongs to the IPP transferase family. In terms of assembly, monomer. Requires Mg(2+) as cofactor.

The enzyme catalyses adenosine(37) in tRNA + dimethylallyl diphosphate = N(6)-dimethylallyladenosine(37) in tRNA + diphosphate. Functionally, catalyzes the transfer of a dimethylallyl group onto the adenine at position 37 in tRNAs that read codons beginning with uridine, leading to the formation of N6-(dimethylallyl)adenosine (i(6)A). This Shewanella sediminis (strain HAW-EB3) protein is tRNA dimethylallyltransferase 1.